Reading from the N-terminus, the 75-residue chain is Small ribosomal subunit protein bS18 (75 aa).

This sequence belongs to the bacterial ribosomal protein bS18 family. As to quaternary structure, part of the 30S ribosomal subunit. Forms a tight heterodimer with protein bS6.

Functionally, binds as a heterodimer with protein bS6 to the central domain of the 16S rRNA, where it helps stabilize the platform of the 30S subunit. This is Small ribosomal subunit protein bS18 from Baumannia cicadellinicola subsp. Homalodisca coagulata.